Consider the following 205-residue polypeptide: Heme-binding protein 2 (205 aa).

The interval 1-37 (MAEEPEPDLGVAEGSEDQALEMPSWKAPEDIDPQPGS) is disordered. Ala2 bears the N-acetylalanine mark. Ser181 is subject to Phosphoserine.

The protein belongs to the HEBP family. In terms of assembly, monomer. Interacts with LRPPRC. May interact with BCL2L1; an interaction with BCL2L1 was observed using a peptide, but not with the full-length protein. The full-length protein would have to undergo a major conformation change for the interaction to occur. Interacts with PDCD6.

Its subcellular location is the cytoplasm. It is found in the mitochondrion. Functionally, can promote mitochondrial permeability transition and facilitate necrotic cell death under different types of stress conditions. May have low affinity for heme. The protein is Heme-binding protein 2 (Hebp2) of Mus musculus (Mouse).